The following is a 186-amino-acid chain: Ran guanine nucleotide release factor (186 aa).

An interaction with RAN region spans residues 27 to 70 (DLRPVPDHQEVFCHRVTDQSLIVELLELQAHVQGEEAARYHFED).

This sequence belongs to the MOG1 family. Monomer. Interacts with RAN, both RAN-GTP and RAN-GDP. Competes with RCC1 for a common binding site on RAN and thereby inhibits RCC1-mediated nucleotide exchange. Forms a complex with RAN-GTP and RANBP1. Interacts with the cytoplasmic loop 2 of SCN5A.

It localises to the nucleus. The protein localises to the cytoplasm. It is found in the perinuclear region. Its subcellular location is the cell membrane. In terms of biological role, may regulate the intracellular trafficking of RAN. Promotes guanine nucleotide release from RAN and inhibits binding of new GTP by preventing the binding of the RAN guanine nucleotide exchange factor RCC1. Regulates the levels of GTP-bound RAN in the nucleus, and thereby plays a role in the regulation of RAN-dependent mitotic spindle dynamics. Enhances the expression of SCN5A at the cell membrane in cardiomyocytes. The sequence is that of Ran guanine nucleotide release factor (RANGRF) from Bos taurus (Bovine).